A 226-amino-acid polypeptide reads, in one-letter code: Thymidylate kinase (226 aa).

16–23 contributes to the ATP binding site; that stretch reads GIDGAGKT.

It belongs to the thymidylate kinase family.

It carries out the reaction dTMP + ATP = dTDP + ADP. Phosphorylation of dTMP to form dTDP in both de novo and salvage pathways of dTTP synthesis. The chain is Thymidylate kinase from Xanthomonas euvesicatoria pv. vesicatoria (strain 85-10) (Xanthomonas campestris pv. vesicatoria).